The following is a 531-amino-acid chain: Methyl-accepting chemotaxis protein McpN (531 aa).

Topologically, residues 1 to 24 (MNESVARVFDRILRGLGLKTLNAQ) are cytoplasmic. The helical transmembrane segment at 25-45 (FLLSYALMFGLAACASVALYL) threads the bilayer. Residues 46-174 (SMSISPETIN…LMSARADSVQ (129 aa)) are Periplasmic-facing. The pilJ-type stretch occupies residues 52–140 (ETINVAGAQR…AMLDQVAQPA (89 aa)). The N-box signature appears at 54–65 (INVAGAQRMLSQ). R61 is a binding site for nitrate. A helical membrane pass occupies residues 175–195 (HTQMWIAFGCLLAILVLVVLG). The Cytoplasmic segment spans residues 196-531 (RQFGLAPLMR…LRVVLGRFRT (336 aa)). One can recognise an HAMP domain in the interval 201-254 (APLMRQLRGLEVALTEVGAANFTHALAAGHADNEIGRIVAGYERMRQDVSGLLA). One can recognise a Methyl-accepting transducer domain in the interval 259-495 (SAAETDKDVA…DIDRNITNVS (237 aa)).

Belongs to the methyl-accepting chemotaxis (MCP) protein family. As to quaternary structure, ligand free ligand-binding domain (LBD) is present in a monomer-dimer equilibrium. Nitrate binding to the periplasmic LBD stabilizes the homodimer.

The protein resides in the cell inner membrane. Functionally, chemotactic-signal transducers respond to changes in the concentration of attractants and repellents in the environment, transduce a signal from the outside to the inside of the cell, and facilitate sensory adaptation through the variation of the level of methylation. McpN is a chemoreceptor that recognizes specifically nitrate and mediates chemoattraction. Binds nitrate specifically and shows no affinity for other ligands such as nitrite. McpN-mediated taxis occurs only under nitrate starvation conditions. The sequence is that of Methyl-accepting chemotaxis protein McpN from Pseudomonas aeruginosa (strain ATCC 15692 / DSM 22644 / CIP 104116 / JCM 14847 / LMG 12228 / 1C / PRS 101 / PAO1).